Reading from the N-terminus, the 62-residue chain is Large ribosomal subunit protein uL30 (62 aa).

Belongs to the universal ribosomal protein uL30 family. As to quaternary structure, part of the 50S ribosomal subunit.

The sequence is that of Large ribosomal subunit protein uL30 from Paracoccus denitrificans (strain Pd 1222).